A 461-amino-acid chain; its full sequence is Cysteine--tRNA ligase (461 aa).

Cys27 serves as a coordination point for Zn(2+). The 'HIGH' region signature appears at 29-39 (ITVYDYCHIGH). Zn(2+) contacts are provided by Cys208, His233, and Glu237. A 'KMSKS' region motif is present at residues 265–269 (KMSKS). Residue Lys268 coordinates ATP.

This sequence belongs to the class-I aminoacyl-tRNA synthetase family. Monomer. Requires Zn(2+) as cofactor.

The protein localises to the cytoplasm. It catalyses the reaction tRNA(Cys) + L-cysteine + ATP = L-cysteinyl-tRNA(Cys) + AMP + diphosphate. This is Cysteine--tRNA ligase from Chromohalobacter salexigens (strain ATCC BAA-138 / DSM 3043 / CIP 106854 / NCIMB 13768 / 1H11).